The following is a 214-amino-acid chain: Cell division protein SepF (214 aa).

A disordered region spans residues 24–120 (DNYEEYEERK…NTRRAQESTA (97 aa)). The span at 30–40 (EERKAVNEPPR) shows a compositional bias: basic and acidic residues. Residues 55-67 (ESYSQPAYTQQSE) are compositionally biased toward polar residues. The span at 69–98 (VVEKPSARYRSAEAHQERDTQQAAYTEKKV) shows a compositional bias: basic and acidic residues. Residues 101 to 120 (MRSSNQSATTNTRRAQESTA) show a composition bias toward polar residues.

It belongs to the SepF family. As to quaternary structure, homodimer. Interacts with FtsZ.

Its subcellular location is the cytoplasm. Cell division protein that is part of the divisome complex and is recruited early to the Z-ring. Probably stimulates Z-ring formation, perhaps through the cross-linking of FtsZ protofilaments. Its function overlaps with FtsA. The protein is Cell division protein SepF of Enterococcus faecalis (strain ATCC 700802 / V583).